The sequence spans 201 residues: LexA repressor (201 aa).

Residues 27 to 47 (RMEISSAFGFASPNAAEDHLK) constitute a DNA-binding region (H-T-H motif). Active-site for autocatalytic cleavage activity residues include Ser-116 and Lys-153.

It belongs to the peptidase S24 family. In terms of assembly, homodimer.

The catalysed reaction is Hydrolysis of Ala-|-Gly bond in repressor LexA.. Represses a number of genes involved in the response to DNA damage (SOS response), including recA and lexA. In the presence of single-stranded DNA, RecA interacts with LexA causing an autocatalytic cleavage which disrupts the DNA-binding part of LexA, leading to derepression of the SOS regulon and eventually DNA repair. This chain is LexA repressor, found in Dechloromonas aromatica (strain RCB).